A 104-amino-acid chain; its full sequence is Putative thioredoxin-4 (104 aa).

Residues 2–104 (SKVTNVSINT…QLRKILDSMK (103 aa)) form the Thioredoxin domain. Residues Cys31 and Cys34 each act as nucleophile in the active site. Cys31 and Cys34 are disulfide-bonded.

Belongs to the thioredoxin family.

In terms of biological role, participates in various redox reactions through the reversible oxidation of its active center dithiol to a disulfide and catalyzes dithiol-disulfide exchange reactions. This is Putative thioredoxin-4 (trxD) from Dictyostelium discoideum (Social amoeba).